The chain runs to 480 residues: UDP-glucose 6-dehydrogenase 4 (480 aa).

Residues 3–20 (KICCIGAGYVGGPTMAVI), D33, R38, T90, T128, and E161 contribute to the NAD(+) site. Substrate contacts are provided by residues 157–161 (EFLAE), K216, 216–223 (KLAANAFL), 256–269 (RIGSKFLNASVGFG), and G269. The active-site Nucleophile is the C272. K275 contributes to the NAD(+) binding site. The substrate site is built by F334 and K335. NAD(+) is bound at residue R342. A substrate-binding site is contributed by R447.

It belongs to the UDP-glucose/GDP-mannose dehydrogenase family.

It carries out the reaction UDP-alpha-D-glucose + 2 NAD(+) + H2O = UDP-alpha-D-glucuronate + 2 NADH + 3 H(+). The protein operates within nucleotide-sugar biosynthesis; UDP-alpha-D-glucuronate biosynthesis; UDP-alpha-D-glucuronate from UDP-alpha-D-glucose: step 1/1. With respect to regulation, inhibited by UDP-xylose. Its function is as follows. Involved in the biosynthesis of UDP-glucuronic acid (UDP-GlcA), providing nucleotide sugars for cell-wall polymers. This Arabidopsis thaliana (Mouse-ear cress) protein is UDP-glucose 6-dehydrogenase 4.